Reading from the N-terminus, the 184-residue chain is Peptidyl-tRNA hydrolase (184 aa).

Tyr14 is a tRNA binding site. His19 acts as the Proton acceptor in catalysis. Phe60 and Asn62 together coordinate tRNA.

Belongs to the PTH family. Monomer.

The protein resides in the cytoplasm. It carries out the reaction an N-acyl-L-alpha-aminoacyl-tRNA + H2O = an N-acyl-L-amino acid + a tRNA + H(+). Functionally, hydrolyzes ribosome-free peptidyl-tRNAs (with 1 or more amino acids incorporated), which drop off the ribosome during protein synthesis, or as a result of ribosome stalling. Its function is as follows. Catalyzes the release of premature peptidyl moieties from peptidyl-tRNA molecules trapped in stalled 50S ribosomal subunits, and thus maintains levels of free tRNAs and 50S ribosomes. The chain is Peptidyl-tRNA hydrolase from Mesomycoplasma hyopneumoniae (strain 7448) (Mycoplasma hyopneumoniae).